The following is a 228-amino-acid chain: Adapter protein MecA (228 aa).

Positions 79-98 (GQKNDDSAADQTDDEGTDTQ) are disordered. Residues 85–95 (SAADQTDDEGT) show a composition bias toward acidic residues.

Belongs to the MecA family. As to quaternary structure, homodimer.

Enables the recognition and targeting of unfolded and aggregated proteins to the ClpC protease or to other proteins involved in proteolysis. The sequence is that of Adapter protein MecA from Lacticaseibacillus casei (strain BL23) (Lactobacillus casei).